The chain runs to 303 residues: Oxygen-dependent coproporphyrinogen-III oxidase (303 aa).

S93 is a substrate binding site. A divalent metal cation-binding residues include H97 and H107. The active-site Proton donor is the H107. 109–111 (NVR) contacts substrate. Positions 146 and 176 each coordinate a divalent metal cation. Positions 241–276 (YVEFNLVYDRGTLFGLQSGGRTESILMSLPPQVRWG) are important for dimerization. 259–261 (GGR) provides a ligand contact to substrate.

It belongs to the aerobic coproporphyrinogen-III oxidase family. In terms of assembly, homodimer. The cofactor is a divalent metal cation.

It localises to the cytoplasm. The enzyme catalyses coproporphyrinogen III + O2 + 2 H(+) = protoporphyrinogen IX + 2 CO2 + 2 H2O. The protein operates within porphyrin-containing compound metabolism; protoporphyrin-IX biosynthesis; protoporphyrinogen-IX from coproporphyrinogen-III (O2 route): step 1/1. In terms of biological role, involved in the heme biosynthesis. Catalyzes the aerobic oxidative decarboxylation of propionate groups of rings A and B of coproporphyrinogen-III to yield the vinyl groups in protoporphyrinogen-IX. The sequence is that of Oxygen-dependent coproporphyrinogen-III oxidase from Pseudomonas putida (strain GB-1).